A 459-amino-acid chain; its full sequence is NADP-specific glutamate dehydrogenase (459 aa).

Lysine 114 is a catalytic residue.

This sequence belongs to the Glu/Leu/Phe/Val dehydrogenases family. Homohexamer.

The catalysed reaction is L-glutamate + NADP(+) + H2O = 2-oxoglutarate + NH4(+) + NADPH + H(+). The protein is NADP-specific glutamate dehydrogenase (gdhA) of Emericella nidulans (strain FGSC A4 / ATCC 38163 / CBS 112.46 / NRRL 194 / M139) (Aspergillus nidulans).